The following is a 61-amino-acid chain: Small ribosomal subunit protein uS14 (61 aa).

Residues Cys24, Cys27, Cys40, and Cys43 each coordinate Zn(2+).

Belongs to the universal ribosomal protein uS14 family. Zinc-binding uS14 subfamily. In terms of assembly, part of the 30S ribosomal subunit. Contacts proteins S3 and S10. Requires Zn(2+) as cofactor.

Binds 16S rRNA, required for the assembly of 30S particles and may also be responsible for determining the conformation of the 16S rRNA at the A site. This chain is Small ribosomal subunit protein uS14, found in Halothermothrix orenii (strain H 168 / OCM 544 / DSM 9562).